The primary structure comprises 348 residues: Selenide, water dikinase (348 aa).

The active site involves selenocysteine 17. Position 17 (selenocysteine 17) is a non-standard amino acid, selenocysteine. ATP-binding positions include lysine 20 and 48-50 (TAD). Aspartate 51 provides a ligand contact to Mg(2+). Residues aspartate 68, aspartate 91, and 138–140 (GHT) each bind ATP. Residue aspartate 91 coordinates Mg(2+). Aspartate 226 contacts Mg(2+).

Belongs to the selenophosphate synthase 1 family. Class I subfamily. As to quaternary structure, homodimer. The cofactor is Mg(2+).

It catalyses the reaction hydrogenselenide + ATP + H2O = selenophosphate + AMP + phosphate + 2 H(+). In terms of biological role, synthesizes selenophosphate from selenide and ATP. The polypeptide is Selenide, water dikinase (Clostridioides difficile (strain 630) (Peptoclostridium difficile)).